We begin with the raw amino-acid sequence, 124 residues long: Small ribosomal subunit protein uS12 (124 aa).

A disordered region spans residues 1-32 (MPTIQQLVRKGRQAKASKTKTPALKGSPQRRG). Over residues 9-18 (RKGRQAKASK) the composition is skewed to basic residues. The residue at position 89 (Asp-89) is a 3-methylthioaspartic acid.

The protein belongs to the universal ribosomal protein uS12 family. Part of the 30S ribosomal subunit. Contacts proteins S8 and S17. May interact with IF1 in the 30S initiation complex.

With S4 and S5 plays an important role in translational accuracy. Its function is as follows. Interacts with and stabilizes bases of the 16S rRNA that are involved in tRNA selection in the A site and with the mRNA backbone. Located at the interface of the 30S and 50S subunits, it traverses the body of the 30S subunit contacting proteins on the other side and probably holding the rRNA structure together. The combined cluster of proteins S8, S12 and S17 appears to hold together the shoulder and platform of the 30S subunit. This chain is Small ribosomal subunit protein uS12, found in Acidothermus cellulolyticus (strain ATCC 43068 / DSM 8971 / 11B).